Reading from the N-terminus, the 167-residue chain is uncharacterized protein (167 aa).

It localises to the plastid. The protein resides in the chloroplast. This is an uncharacterized protein from Mesostigma viride (Green alga).